The following is a 153-amino-acid chain: 6,7-dimethyl-8-ribityllumazine synthase (153 aa).

5-amino-6-(D-ribitylamino)uracil contacts are provided by residues F22, 56–58 (AFE), and 80–82 (TVI). A (2S)-2-hydroxy-3-oxobutyl phosphate-binding site is contributed by 85 to 86 (ST). H88 acts as the Proton donor in catalysis. Residue F113 coordinates 5-amino-6-(D-ribitylamino)uracil. (2S)-2-hydroxy-3-oxobutyl phosphate is bound at residue R127.

The protein belongs to the DMRL synthase family. In terms of assembly, forms an icosahedral capsid composed of 60 subunits, arranged as a dodecamer of pentamers.

It catalyses the reaction (2S)-2-hydroxy-3-oxobutyl phosphate + 5-amino-6-(D-ribitylamino)uracil = 6,7-dimethyl-8-(1-D-ribityl)lumazine + phosphate + 2 H2O + H(+). It participates in cofactor biosynthesis; riboflavin biosynthesis; riboflavin from 2-hydroxy-3-oxobutyl phosphate and 5-amino-6-(D-ribitylamino)uracil: step 1/2. Functionally, catalyzes the formation of 6,7-dimethyl-8-ribityllumazine by condensation of 5-amino-6-(D-ribitylamino)uracil with 3,4-dihydroxy-2-butanone 4-phosphate. This is the penultimate step in the biosynthesis of riboflavin. This is 6,7-dimethyl-8-ribityllumazine synthase from Actinobacillus pleuropneumoniae serotype 5b (strain L20).